We begin with the raw amino-acid sequence, 259 residues long: Sorbitol-6-phosphate 2-dehydrogenase (259 aa).

4 to 33 (VAVVIGGGQTLGAFLCHGLAAEGYRVAVVD) serves as a coordination point for NAD(+). Residue S141 participates in substrate binding. The Proton acceptor role is filled by Y154.

This sequence belongs to the short-chain dehydrogenases/reductases (SDR) family. In terms of assembly, homotetramer.

The catalysed reaction is D-sorbitol 6-phosphate + NAD(+) = beta-D-fructose 6-phosphate + NADH + H(+). The protein operates within carbohydrate metabolism; D-sorbitol degradation; D-fructose 6-phosphate from D-sorbitol 6-phosphate: step 1/1. The chain is Sorbitol-6-phosphate 2-dehydrogenase (srlD) from Escherichia coli (strain K12).